A 293-amino-acid chain; its full sequence is Ribonuclease HII (293 aa).

The 191-residue stretch at 81–271 (THIAGVDEAG…VREALGLPTG (191 aa)) folds into the RNase H type-2 domain. Asp-87, Glu-88, and Asp-180 together coordinate a divalent metal cation. The interval 273–293 (PPSALQAELFPEAPSRTGVKS) is disordered.

This sequence belongs to the RNase HII family. The cofactor is Mn(2+). Mg(2+) is required as a cofactor.

The protein resides in the cytoplasm. It catalyses the reaction Endonucleolytic cleavage to 5'-phosphomonoester.. Its function is as follows. Endonuclease that specifically degrades the RNA of RNA-DNA hybrids. The sequence is that of Ribonuclease HII from Myxococcus xanthus (strain DK1622).